Here is a 193-residue protein sequence, read N- to C-terminus: Outer-membrane lipoprotein LolB (193 aa).

Residues 1-21 (MRPARRFLAALACVAGALLSA) form the signal peptide. C22 carries N-palmitoyl cysteine lipidation. A lipid anchor (S-diacylglycerol cysteine) is attached at C22.

Belongs to the LolB family. As to quaternary structure, monomer.

The protein localises to the cell outer membrane. Functionally, plays a critical role in the incorporation of lipoproteins in the outer membrane after they are released by the LolA protein. This Azoarcus sp. (strain BH72) protein is Outer-membrane lipoprotein LolB.